A 608-amino-acid chain; its full sequence is Growth hormone receptor (608 aa).

A signal peptide spans 1–16 (MDLRHLLFTLALVCAN). At 17–237 (DSLSASDDLL…EFVHCAEEIE (221 aa)) the chain is on the extracellular side. Disulfide bonds link cysteine 34-cysteine 44 and cysteine 72-cysteine 83. Asparagine 86 carries an N-linked (GlcNAc...) asparagine glycan. A disulfide bridge links cysteine 97 with cysteine 111. The region spanning 122-226 (PPVHLNWTLL…ILYVSFTQAG (105 aa)) is the Fibronectin type-III domain. 3 N-linked (GlcNAc...) asparagine glycosylation sites follow: asparagine 127, asparagine 132, and asparagine 171. The short motif at 211–215 (FGEFS) is the WSXWS motif element. Residues 238 to 261 (FPWFLVVVFGVCGLAVTAILILLS) traverse the membrane as a helical segment. The Cytoplasmic segment spans residues 262–608 (KQPRLKMLIF…STDQLNKIMP (347 aa)). A required for JAK2 binding region spans residues 267–352 (KMLIFPPVPV…HLKSHSCLGA (86 aa)). The Box 1 motif motif lies at 270–278 (IFPPVPVPK). Residues 313–322 (DLWVEFIELD) carry the UbE motif motif. 2 stretches are compositionally biased toward polar residues: residues 413 to 426 (ANTDTQQPHTSTQS) and 438 to 451 (STDSANPSVQTQLS). Residues 413-451 (ANTDTQQPHTSTQSESRESWPPFADSTDSANPSVQTQLS) form a disordered region.

It belongs to the type I cytokine receptor family. Type 1 subfamily. In terms of processing, on GH binding, proteolytically cleaved, in vitro, to produce GHBP. Broad specificity.

The protein resides in the cell membrane. It localises to the secreted. Its function is as follows. Receptor for pituitary gland growth hormone (GH1) involved in regulating postnatal body growth. On ligand binding, couples to the JAK2/STAT5 pathway. In terms of biological role, the soluble form (GHBP) acts as a reservoir of growth hormone in plasma and may be a modulator/inhibitor of GH signaling. This Gallus gallus (Chicken) protein is Growth hormone receptor (GHR).